The chain runs to 615 residues: uncharacterized protein (615 aa).

This sequence belongs to the NodU/CmcH family.

This is an uncharacterized protein from Synechocystis sp. (strain ATCC 27184 / PCC 6803 / Kazusa).